A 225-amino-acid polypeptide reads, in one-letter code: UPF0758 protein Shal_0429 (225 aa).

In terms of domain architecture, MPN spans 102-224; the sequence is ILSDPDLTRD…IVSFAERGWI (123 aa). Zn(2+) is bound by residues H173, H175, and D186. Residues 173-186 carry the JAMM motif motif; sequence HNHPSGIAEPSTAD.

This sequence belongs to the UPF0758 family.

The polypeptide is UPF0758 protein Shal_0429 (Shewanella halifaxensis (strain HAW-EB4)).